Here is a 120-residue protein sequence, read N- to C-terminus: Small ribosomal subunit protein uS13 (120 aa).

A disordered region spans residues 94–120; the sequence is GLPLRGQRTRTNARTRKGPRKAIAGKK.

Belongs to the universal ribosomal protein uS13 family. Part of the 30S ribosomal subunit. Forms a loose heterodimer with protein S19. Forms two bridges to the 50S subunit in the 70S ribosome.

Its function is as follows. Located at the top of the head of the 30S subunit, it contacts several helices of the 16S rRNA. In the 70S ribosome it contacts the 23S rRNA (bridge B1a) and protein L5 of the 50S subunit (bridge B1b), connecting the 2 subunits; these bridges are implicated in subunit movement. Contacts the tRNAs in the A and P-sites. This Azoarcus sp. (strain BH72) protein is Small ribosomal subunit protein uS13.